A 224-amino-acid polypeptide reads, in one-letter code: Abasic site processing protein YoqW (224 aa).

The Nucleophile role is filled by Cys2. Residue Cys2 is modified to Thiazolidine linkage to a ring-opened DNA abasic site. Glu106 is a catalytic residue.

This sequence belongs to the SOS response-associated peptidase family.

Its activity is regulated as follows. Formation and reversal of DNA-protein cross-link depends on DNA context. Catalyzes formation of the thiazolidine linkage in presence of abasic sites in single-stranded DNA. Mediates the reversal of the thiazolidine cross-link in presence of double stranded DNA. In terms of biological role, sensor of abasic sites in single-stranded DNA (ssDNA) required to preserve genome integrity by promoting error-free repair of abasic sites. Recognizes and binds abasic sites in ssDNA at replication forks and chemically modifies the lesion by forming a covalent cross-link with DNA: forms a stable thiazolidine linkage between a ring-opened abasic site and the alpha-amino and sulfhydryl substituents of its N-terminal catalytic cysteine residue. The DNA-protein cross-link is then reversed: able to catalyze the reversal of the thiazolidine cross-link and cycle between a cross-link and a non-cross-linked state depending on DNA context: mediates self-reversal of the thiazolidine cross-link in double stranded DNA. May act as a protease: mediates autocatalytic processing of its N-terminal methionine in order to expose the catalytic cysteine. The polypeptide is Abasic site processing protein YoqW (yoqW) (Bacillus subtilis (strain 168)).